Consider the following 305-residue polypeptide: Urease accessory protein UreD (305 aa).

This sequence belongs to the UreD family. UreD, UreF and UreG form a complex that acts as a GTP-hydrolysis-dependent molecular chaperone, activating the urease apoprotein by helping to assemble the nickel containing metallocenter of UreC. The UreE protein probably delivers the nickel.

The protein localises to the cytoplasm. Its function is as follows. Required for maturation of urease via the functional incorporation of the urease nickel metallocenter. The chain is Urease accessory protein UreD from Delftia acidovorans (strain DSM 14801 / SPH-1).